A 162-amino-acid polypeptide reads, in one-letter code: MVSGRGLVVTAKMLNAKKKELQDLLDVRIPENSREIGRALELGDLRENAEYKAAREEQTRLNNMVTRLQEEIERAQVFDPTTVVAGRVSFGTVISLKNHTSGEDETYTILGPWESAPERGIISYMSPLGSNLLNRKTGEQLAFTVGEHEKVYEILSISAAEI.

Positions Arg-46–Val-77 form a coiled coil.

It belongs to the GreA/GreB family.

In terms of biological role, necessary for efficient RNA polymerase transcription elongation past template-encoded arresting sites. The arresting sites in DNA have the property of trapping a certain fraction of elongating RNA polymerases that pass through, resulting in locked ternary complexes. Cleavage of the nascent transcript by cleavage factors such as GreA or GreB allows the resumption of elongation from the new 3'terminus. GreA releases sequences of 2 to 3 nucleotides. The sequence is that of Transcription elongation factor GreA from Treponema pallidum (strain Nichols).